The chain runs to 217 residues: Probable transaldolase (217 aa).

Residue Lys-83 is the Schiff-base intermediate with substrate of the active site.

Belongs to the transaldolase family. Type 3B subfamily.

It localises to the cytoplasm. It catalyses the reaction D-sedoheptulose 7-phosphate + D-glyceraldehyde 3-phosphate = D-erythrose 4-phosphate + beta-D-fructose 6-phosphate. It functions in the pathway carbohydrate degradation; pentose phosphate pathway; D-glyceraldehyde 3-phosphate and beta-D-fructose 6-phosphate from D-ribose 5-phosphate and D-xylulose 5-phosphate (non-oxidative stage): step 2/3. Its function is as follows. Transaldolase is important for the balance of metabolites in the pentose-phosphate pathway. The chain is Probable transaldolase from Sinorhizobium medicae (strain WSM419) (Ensifer medicae).